We begin with the raw amino-acid sequence, 95 residues long: F(1)-ATPase inhibitor IF(1), mitochondrial (95 aa).

The transit peptide at 1-25 directs the protein to the mitochondrion; that stretch reads MLRTTVSKLARPTVSRAFATTSRAL. 2 disordered regions span residues 20–48 and 76–95; these read TTSR…REKA and LKTL…GERN.

Belongs to the ATPase inhibitor family. Associates with the mitochondrial small ribosomal subunit (mt-SSU). IF(1) coiled-coil forms a helical bundle with the C-terminal extension of uS17m and also binds to mS27 in the mtSSU tail. Since the C-terminal extension of uS17m stabilizing the IF(1) on the mt-SSU is specific to N.crassa, IF(1) binding might also be specific.

It is found in the mitochondrion. In terms of biological role, endogenous F(1)F(0)-ATPase inhibitor limiting ATP depletion when the mitochondrial membrane potential falls below a threshold and the F(1)F(0)-ATP synthase starts hydrolyzing ATP to pump protons out of the mitochondrial matrix. Required to avoid the consumption of cellular ATP when the F(1)F(0)-ATP synthase enzyme acts as an ATP hydrolase. Functions through inserting its N-terminal part into the catalytically active F1-ATPase, thereby blocking its rotational movement and subsequently the ATP hydrolase activity. The protein is F(1)-ATPase inhibitor IF(1), mitochondrial (inh1) of Neurospora crassa (strain ATCC 24698 / 74-OR23-1A / CBS 708.71 / DSM 1257 / FGSC 987).